The primary structure comprises 305 residues: MHTDLRADQKAEVLIEALPWLEEFAGQRIVVKYGGNAMVDDHLKQCFAEDMVFLRQVGLHPIVVHGGGPQISHMLKALGIKSEFKGGLRVTTPEAMDVVRMVLTGKVSRELVGLINAHGPLAVGMSGEDGGLFSAMQRRPVIDGKPTDIGLVGDVVSVDASAVEDLVAAGRIPVVSSVAPNEEDATEVLNVNADSAAAALAAAVGAHKLVILTDVDGLYADWPDKNSLIGRIGVENLRDMLPDLESGMRPKMEACVRAIDGGVPQAHVIDGRKPHSILNEIFTSAGIGTMVMPDEGLEMRSSYGY.

Residues 67–68, R89, and N190 contribute to the substrate site; that span reads GG.

This sequence belongs to the acetylglutamate kinase family. ArgB subfamily.

Its subcellular location is the cytoplasm. It catalyses the reaction N-acetyl-L-glutamate + ATP = N-acetyl-L-glutamyl 5-phosphate + ADP. It functions in the pathway amino-acid biosynthesis; L-arginine biosynthesis; N(2)-acetyl-L-ornithine from L-glutamate: step 2/4. Catalyzes the ATP-dependent phosphorylation of N-acetyl-L-glutamate. The chain is Acetylglutamate kinase from Bifidobacterium longum (strain NCC 2705).